The primary structure comprises 235 residues: 2,3-bisphosphoglycerate-dependent phosphoglycerate mutase 1 (235 aa).

Substrate-binding positions include 8–15, 21–22, R60, 87–90, K98, and 114–115; these read RHGESVAN, TG, ERHY, and RR. The Tele-phosphohistidine intermediate role is filled by H9. The active-site Proton donor/acceptor is E87.

Belongs to the phosphoglycerate mutase family. BPG-dependent PGAM subfamily.

The catalysed reaction is (2R)-2-phosphoglycerate = (2R)-3-phosphoglycerate. It functions in the pathway carbohydrate degradation; glycolysis; pyruvate from D-glyceraldehyde 3-phosphate: step 3/5. In terms of biological role, catalyzes the interconversion of 2-phosphoglycerate and 3-phosphoglycerate. The sequence is that of 2,3-bisphosphoglycerate-dependent phosphoglycerate mutase 1 from Latilactobacillus sakei subsp. sakei (strain 23K) (Lactobacillus sakei subsp. sakei).